Here is a 342-residue protein sequence, read N- to C-terminus: MTNILSPEKSENDQELPIRPSYLQEFVGQQQIKENLSVFIKAAKSRNEHLDHTLFYGPPGLGKTTLAKIISNEIGGNFKSTSGPAILKVADLAAILTNLEKNDVLFIDEIHRLNTAVEEVLYPAMEDFELDIIIGEGSAARSVKITLPKFTLIGATTRLGLLSNPLRDRFGIPMRLNFYNTEELKKVLNRASKLLDIDLTDSGSEEIAKRSRGTPRIALRLLRRIRDFAAVEGKSRVDKEVSDFGLNRLEVDRIGLDSNDYRYLKFIADNYNGGPVGIETIAAALSEQRDALEETIEPYLIQIGLLQRTPRGRVITIAAFEHLKMSVPNQSHHQFNIFNENE.

The large ATPase domain (RuvB-L) stretch occupies residues 1-179; it reads MTNILSPEKS…FGIPMRLNFY (179 aa). ATP-binding positions include Ile18, Arg19, Gly60, Lys63, Thr64, Thr65, 126 to 128, Arg169, Tyr179, and Arg216; that span reads EDF. A Mg(2+)-binding site is contributed by Thr64. The small ATPAse domain (RuvB-S) stretch occupies residues 180-250; that stretch reads NTEELKKVLN…VSDFGLNRLE (71 aa). The tract at residues 253 to 342 is head domain (RuvB-H); sequence RIGLDSNDYR…HQFNIFNENE (90 aa). 3 residues coordinate DNA: Arg289, Arg308, and Arg313.

The protein belongs to the RuvB family. As to quaternary structure, homohexamer. Forms an RuvA(8)-RuvB(12)-Holliday junction (HJ) complex. HJ DNA is sandwiched between 2 RuvA tetramers; dsDNA enters through RuvA and exits via RuvB. An RuvB hexamer assembles on each DNA strand where it exits the tetramer. Each RuvB hexamer is contacted by two RuvA subunits (via domain III) on 2 adjacent RuvB subunits; this complex drives branch migration. In the full resolvosome a probable DNA-RuvA(4)-RuvB(12)-RuvC(2) complex forms which resolves the HJ.

The protein localises to the cytoplasm. The catalysed reaction is ATP + H2O = ADP + phosphate + H(+). In terms of biological role, the RuvA-RuvB-RuvC complex processes Holliday junction (HJ) DNA during genetic recombination and DNA repair, while the RuvA-RuvB complex plays an important role in the rescue of blocked DNA replication forks via replication fork reversal (RFR). RuvA specifically binds to HJ cruciform DNA, conferring on it an open structure. The RuvB hexamer acts as an ATP-dependent pump, pulling dsDNA into and through the RuvAB complex. RuvB forms 2 homohexamers on either side of HJ DNA bound by 1 or 2 RuvA tetramers; 4 subunits per hexamer contact DNA at a time. Coordinated motions by a converter formed by DNA-disengaged RuvB subunits stimulates ATP hydrolysis and nucleotide exchange. Immobilization of the converter enables RuvB to convert the ATP-contained energy into a lever motion, pulling 2 nucleotides of DNA out of the RuvA tetramer per ATP hydrolyzed, thus driving DNA branch migration. The RuvB motors rotate together with the DNA substrate, which together with the progressing nucleotide cycle form the mechanistic basis for DNA recombination by continuous HJ branch migration. Branch migration allows RuvC to scan DNA until it finds its consensus sequence, where it cleaves and resolves cruciform DNA. The sequence is that of Holliday junction branch migration complex subunit RuvB from Rickettsia rickettsii (strain Sheila Smith).